The primary structure comprises 366 residues: Transmembrane protein 25 (366 aa).

Positions 1 to 26 (MALPPGPAALRHTLLLLPALLSSGWG) are cleaved as a signal peptide. The Extracellular segment spans residues 27-232 (ELEPQIDGQT…APGLLATRVE (206 aa)). Positions 30 to 123 (PQIDGQTWAE…SGRSANASVI (94 aa)) constitute an Ig-like domain. Residues C52 and C107 are joined by a disulfide bond. N-linked (GlcNAc...) asparagine glycans are attached at residues N106, N162, N175, N192, and N205. A helical transmembrane segment spans residues 233-253 (VPLLGIVVAAGLALGTLVGFS). The Cytoplasmic segment spans residues 254 to 366 (TLVACLVCRK…SSVSSDEIWL (113 aa)). Over residues 299-308 (PSNLQLNDLT) the composition is skewed to polar residues. The tract at residues 299-335 (PSNLQLNDLTPDSRAVKPADRQMAQNNSRPELLDPEP) is disordered.

Interacts with GRIN2B. As to expression, expressed throughout the brain with higher levels in the pyramidal cell layer of the hippocampal CA1 and CA3 regions. Also highly expressed within the hippocampal dentate gyrus region and cerebellum and in scattered neurons in the cerebral cortex.

It is found in the cell membrane. Its subcellular location is the secreted. It localises to the late endosome. The protein localises to the lysosome. Its function is as follows. In neurons, modulates the degradation of NMDA receptor GRIN2B subunit. Plays a role in the regulation of neuronal excitability. This Homo sapiens (Human) protein is Transmembrane protein 25 (TMEM25).